The primary structure comprises 300 residues: uncharacterized protein (300 aa).

Disordered stretches follow at residues 167 to 186 (DVFL…HHEH) and 224 to 244 (ADGS…DASH). The segment covering 224-236 (ADGSSLETSSMSS) has biased composition (polar residues).

This is an uncharacterized protein from Rattus norvegicus (Rat).